Here is a 441-residue protein sequence, read N- to C-terminus: Damage-control phosphatase ARMT1 (441 aa).

Position 2 is an N-acetylalanine (Ala-2). An N6-acetyllysine modification is found at Lys-40. Phosphoserine is present on Ser-102. Positions 253 and 254 each coordinate Mn(2+). 253 to 254 (DN) lines the substrate pocket. S-adenosyl-L-methionine-binding residues include Glu-258 and Asp-291. Asp-291 contributes to the Mn(2+) binding site. Residues 367–371 (DLNYR) and Lys-404 contribute to the substrate site. The Subfamily III RTxK motif motif lies at 401 to 404 (RTLK).

It belongs to the damage-control phosphatase family. Sugar phosphate phosphatase III subfamily. Requires Mn(2+) as cofactor. Ni(2+) is required as a cofactor. Post-translationally, automethylated.

It catalyses the reaction beta-D-fructose 1-phosphate + H2O = D-fructose + phosphate. The enzyme catalyses beta-D-fructose 6-phosphate = dihydroxyacetone + D-glyceraldehyde 3-phosphate. The catalysed reaction is L-glutamyl-[protein] + S-adenosyl-L-methionine = [protein]-L-glutamate 5-O-methyl ester + S-adenosyl-L-homocysteine. In terms of biological role, metal-dependent phosphatase that shows phosphatase activity against several substrates, including fructose-1-phosphate and fructose-6-phosphate. Its preference for fructose-1-phosphate, a strong glycating agent that causes DNA damage rather than a canonical yeast metabolite, suggests a damage-control function in hexose phosphate metabolism. Has also been shown to have O-methyltransferase activity that methylates glutamate residues of target proteins to form gamma-glutamyl methyl ester residues. Possibly methylates PCNA, suggesting it is involved in the DNA damage response. The sequence is that of Damage-control phosphatase ARMT1 from Homo sapiens (Human).